A 481-amino-acid chain; its full sequence is uncharacterized protein (481 aa).

The next 10 helical transmembrane spans lie at 32–52, 82–102, 137–157, 173–193, 204–224, 258–278, 289–309, 348–368, 392–412, and 418–438; these read LSWL…YWGV, FFHW…IMAY, MFLI…AATF, VQAF…WIGI, VGWG…TEFI, WTVF…MFVT, VIWG…GVME, LFLA…MDAV, LFWC…GASL, and TVVL…GGFI.

This sequence belongs to the BCCT transporter (TC 2.A.15) family.

It is found in the cell inner membrane. Probable transporter whose substrate is unknown. Is not involved in aerobic D-malate transport. This is an uncharacterized protein from Escherichia coli (strain K12).